A 211-amino-acid chain; its full sequence is Pyridoxine/pyridoxamine 5'-phosphate oxidase (211 aa).

Substrate contacts are provided by residues 7-10 (RREY) and lysine 65. Residues 60 to 65 (RTVLLK), 75 to 76 (YT), arginine 81, lysine 82, and glutamine 104 contribute to the FMN site. Residues tyrosine 122, arginine 126, and serine 130 each coordinate substrate. Residues 139-140 (QS) and tryptophan 184 contribute to the FMN site. 190 to 192 (RLH) provides a ligand contact to substrate. Residue arginine 194 participates in FMN binding.

This sequence belongs to the pyridoxamine 5'-phosphate oxidase family. In terms of assembly, homodimer. It depends on FMN as a cofactor.

It catalyses the reaction pyridoxamine 5'-phosphate + O2 + H2O = pyridoxal 5'-phosphate + H2O2 + NH4(+). It carries out the reaction pyridoxine 5'-phosphate + O2 = pyridoxal 5'-phosphate + H2O2. Its pathway is cofactor metabolism; pyridoxal 5'-phosphate salvage; pyridoxal 5'-phosphate from pyridoxamine 5'-phosphate: step 1/1. The protein operates within cofactor metabolism; pyridoxal 5'-phosphate salvage; pyridoxal 5'-phosphate from pyridoxine 5'-phosphate: step 1/1. Its function is as follows. Catalyzes the oxidation of either pyridoxine 5'-phosphate (PNP) or pyridoxamine 5'-phosphate (PMP) into pyridoxal 5'-phosphate (PLP). This is Pyridoxine/pyridoxamine 5'-phosphate oxidase from Aeromonas hydrophila subsp. hydrophila (strain ATCC 7966 / DSM 30187 / BCRC 13018 / CCUG 14551 / JCM 1027 / KCTC 2358 / NCIMB 9240 / NCTC 8049).